The following is a 487-amino-acid chain: N-succinylglutamate 5-semialdehyde dehydrogenase (487 aa).

Residue Gly-221–Gly-226 participates in NAD(+) binding. Catalysis depends on residues Glu-244 and Cys-278.

This sequence belongs to the aldehyde dehydrogenase family. AstD subfamily.

The enzyme catalyses N-succinyl-L-glutamate 5-semialdehyde + NAD(+) + H2O = N-succinyl-L-glutamate + NADH + 2 H(+). Its pathway is amino-acid degradation; L-arginine degradation via AST pathway; L-glutamate and succinate from L-arginine: step 4/5. Its function is as follows. Catalyzes the NAD-dependent reduction of succinylglutamate semialdehyde into succinylglutamate. The sequence is that of N-succinylglutamate 5-semialdehyde dehydrogenase from Pseudomonas putida (strain ATCC 47054 / DSM 6125 / CFBP 8728 / NCIMB 11950 / KT2440).